Here is an 814-residue protein sequence, read N- to C-terminus: Transcription activator of gluconeogenesis PADG_03802 (814 aa).

Positions 1-90 (MTSSARNGSP…SAKDPLRPRR (90 aa)) are disordered. The span at 69–83 (STSSTAASANNASAK) shows a compositional bias: low complexity. Positions 97 to 125 (CFACQRAHLTCGDERPCQRCIKRGLQDTC) form a DNA-binding region, zn(2)-C6 fungal-type. 6 disordered regions span residues 164–208 (NTNS…TNNY), 236–287 (SAFQ…PTFF), 323–384 (AGDT…SRNI), 442–461 (PPTNTQHQQQPQPPRISTPS), 598–617 (TGGSSSSGVSSRGSSTYNSR), and 695–739 (SAAG…ATNV). A compositionally biased stretch (low complexity) spans 171-188 (NGTNSNSDNNSTNTNSNN). 4 stretches are compositionally biased toward polar residues: residues 189 to 208 (KPSHQDVSTNFFSTPSTNNY), 248 to 279 (FDLSSNPQNHTLSPSMAQNSGTTPSSSASQNP), 339 to 359 (GRSSGTFTVQNFGEGSSNQSP), and 375 to 384 (GQGQTNSRNI). A compositionally biased stretch (low complexity) spans 442-451 (PPTNTQHQQQ). Residues 720 to 739 (GTTSAVNGVSNGSGNNATNV) are compositionally biased toward low complexity.

The protein belongs to the ERT1/acuK family.

The protein resides in the nucleus. Transcription factor which regulates nonfermentable carbon utilization. Activator of gluconeogenetic genes. In Paracoccidioides brasiliensis (strain Pb18), this protein is Transcription activator of gluconeogenesis PADG_03802.